A 509-amino-acid chain; its full sequence is Maturase K (509 aa).

Belongs to the intron maturase 2 family. MatK subfamily.

It is found in the plastid. Its subcellular location is the chloroplast. In terms of biological role, usually encoded in the trnK tRNA gene intron. Probably assists in splicing its own and other chloroplast group II introns. The polypeptide is Maturase K (Chamaecyparis obtusa (Hinoki false-cypress)).